Reading from the N-terminus, the 116-residue chain is Iron-sulfur cluster insertion protein ErpA (116 aa).

Residues C44, C108, and C110 each contribute to the iron-sulfur cluster site.

This sequence belongs to the HesB/IscA family. In terms of assembly, homodimer. It depends on iron-sulfur cluster as a cofactor.

Required for insertion of 4Fe-4S clusters for at least IspG. The protein is Iron-sulfur cluster insertion protein ErpA of Shewanella denitrificans (strain OS217 / ATCC BAA-1090 / DSM 15013).